We begin with the raw amino-acid sequence, 291 residues long: ATP synthase gamma chain (291 aa).

The protein belongs to the ATPase gamma chain family. As to quaternary structure, F-type ATPases have 2 components, CF(1) - the catalytic core - and CF(0) - the membrane proton channel. CF(1) has five subunits: alpha(3), beta(3), gamma(1), delta(1), epsilon(1). CF(0) has three main subunits: a, b and c.

Its subcellular location is the cell inner membrane. In terms of biological role, produces ATP from ADP in the presence of a proton gradient across the membrane. The gamma chain is believed to be important in regulating ATPase activity and the flow of protons through the CF(0) complex. The sequence is that of ATP synthase gamma chain from Methylobacillus flagellatus (strain ATCC 51484 / DSM 6875 / VKM B-1610 / KT).